A 332-amino-acid chain; its full sequence is ADP-L-glycero-D-manno-heptose-6-epimerase (332 aa).

NADP(+) is bound by residues 13–14 (FI), 34–35 (DN), lysine 41, lysine 56, 78–82 (EGACS), and asparagine 95. Residue tyrosine 142 is the Proton acceptor of the active site. Lysine 146 provides a ligand contact to NADP(+). Asparagine 171 contributes to the substrate binding site. Valine 172 and lysine 180 together coordinate NADP(+). Lysine 180 acts as the Proton acceptor in catalysis. Substrate-binding positions include arginine 182, histidine 189, 203–206 (FEGC), arginine 216, and tyrosine 295.

It belongs to the NAD(P)-dependent epimerase/dehydratase family. HldD subfamily. Homopentamer. Requires NADP(+) as cofactor.

The catalysed reaction is ADP-D-glycero-beta-D-manno-heptose = ADP-L-glycero-beta-D-manno-heptose. It participates in nucleotide-sugar biosynthesis; ADP-L-glycero-beta-D-manno-heptose biosynthesis; ADP-L-glycero-beta-D-manno-heptose from D-glycero-beta-D-manno-heptose 7-phosphate: step 4/4. Its function is as follows. Catalyzes the interconversion between ADP-D-glycero-beta-D-manno-heptose and ADP-L-glycero-beta-D-manno-heptose via an epimerization at carbon 6 of the heptose. In Thiobacillus denitrificans (strain ATCC 25259 / T1), this protein is ADP-L-glycero-D-manno-heptose-6-epimerase.